The chain runs to 213 residues: Probable transaldolase (213 aa).

Catalysis depends on Lys83, which acts as the Schiff-base intermediate with substrate.

The protein belongs to the transaldolase family. Type 3B subfamily.

It localises to the cytoplasm. The catalysed reaction is D-sedoheptulose 7-phosphate + D-glyceraldehyde 3-phosphate = D-erythrose 4-phosphate + beta-D-fructose 6-phosphate. It participates in carbohydrate degradation; pentose phosphate pathway; D-glyceraldehyde 3-phosphate and beta-D-fructose 6-phosphate from D-ribose 5-phosphate and D-xylulose 5-phosphate (non-oxidative stage): step 2/3. Its function is as follows. Transaldolase is important for the balance of metabolites in the pentose-phosphate pathway. The polypeptide is Probable transaldolase (Oceanobacillus iheyensis (strain DSM 14371 / CIP 107618 / JCM 11309 / KCTC 3954 / HTE831)).